The chain runs to 257 residues: V-type proton ATPase subunit D (257 aa).

The segment at 211–233 (KKKDLKAKEAQKEENSANKTIME) is disordered. The segment covering 216 to 226 (KAKEAQKEENS) has biased composition (basic and acidic residues).

Belongs to the V-ATPase D subunit family. As to quaternary structure, V-ATPase is a heteromultimeric enzyme composed of a peripheral catalytic V1 complex (components A to H) attached to an integral membrane V0 proton pore complex (components: a, c, c', c'' and d).

Subunit of the peripheral V1 complex of vacuolar ATPase. Vacuolar ATPase is responsible for acidifying a variety of intracellular compartments in eukaryotic cells, thus providing most of the energy required for transport processes in the vacuolar system. The sequence is that of V-type proton ATPase subunit D (atp6v1d) from Dictyostelium discoideum (Social amoeba).